The following is an 852-amino-acid chain: Disrupted in schizophrenia 1 homolog (852 aa).

Disordered regions lie at residues 1–86 (MQGG…GLDP), 236–264 (EAEPLHQRPQEMAAEASSSDRPHGDPRHL), and 280–320 (QVTR…QGGG). Residues 1 to 294 (MQGGGPRGAP…SSRQSECGTV (294 aa)) form an interaction with MAP1A region. The span at 65-79 (AGLTGQQSQHSQSKA) shows a compositional bias: polar residues. Residues 253–263 (SSDRPHGDPRH) show a composition bias toward basic and acidic residues. Over residues 288–311 (QSECGTVSSSSSDTGFSSQDASSA) the composition is skewed to low complexity. The tract at residues 295–693 (SSSSSDTGFS…LGRVWKADLE (399 aa)) is interaction with TRAF3IP1. Coiled-coil stretches lie at residues 367–397 (EDGDYDTAETLRQRLEELEQEKGRLSWALPS) and 449–496 (ITRR…LLRW). A required for localization to punctate cytoplasmic foci region spans residues 437–594 (LRTTAQDSLP…LLEAKMLALS (158 aa)). A necessary and sufficient for interaction with PCNT and localization at the centrosome region spans residues 443 to 852 (DSLPASITRR…PTAGAQETEA (410 aa)). Residues 595-852 (GSCFSTAKEL…PTAGAQETEA (258 aa)) form an interaction with ATF4 and ATF5 region. Disordered stretches follow at residues 706 to 746 (EAGS…KSPL) and 833 to 852 (KEAGEASASYPTAGAQETEA). An interaction with NDEL1 and PAFAH1B1 region spans residues 728–852 (TAALAVPRTP…PTAGAQETEA (125 aa)). The interaction with PAFAH1B1 stretch occupies residues 728–852 (TAALAVPRTP…PTAGAQETEA (125 aa)). An interaction with NDEL1 region spans residues 802–835 (SHDEALFQSLQGELQTVKETLQAMILQLQPTKEA).

In terms of assembly, interacts with NDEL1. Interacts with CCDC88A (via C-terminus); the interaction is direct. Interacts with GSK3B. Interacts with tubulin alpha, ACTN2, ANKHD1, ATF4, ATF5, CEP63, EIF3S3, MAP1A, NDEL1, PAFAH1B1, RANBP9, SPTBN4, SYNE1 and TRAF3IP1. Interaction with microtubules may be mediated in part by TRAF3IP1. Interacts (via C-terminal) with PCNT. Interacts with CHCHD6. Interacts with CCDC141. Interacts with FBXW7, the substrate-recognition component of a SCF (SKP1-CUL1-F-box protein) E3 ubiquitin-protein ligase complex; the interaction targets DISC1 for proteasomal degradation. Interacts with ZNF365. Interacts with ATF4; inhibiting ATF4 transcription factor activity by disrupting ATF4 dimerization and DNA-binding. Interacts with PDE4B. Ubiquitinated. Ubiquitination with 'Lys-48'-linked polyubiquitin chains leads to its proteasomal degradation. In terms of tissue distribution, expressed in granule cell precursors within the dentate migratory stream during the first week of postnatal life and in differentiated granule cells of the hippocampus (at protein level). Detected in heart, brain, kidney, and testis. Expressed in dentate gyrus, hippocampus and in the olfactory bulb.

The protein localises to the cytoplasm. The protein resides in the cytoskeleton. It is found in the mitochondrion. It localises to the microtubule organizing center. Its subcellular location is the centrosome. The protein localises to the postsynaptic density. Functionally, involved in the regulation of multiple aspects of embryonic and adult neurogenesis. Required for neural progenitor proliferation in the ventrical/subventrical zone during embryonic brain development and in the adult dentate gyrus of the hippocampus. Participates in the Wnt-mediated neural progenitor proliferation as a positive regulator by modulating GSK3B activity and CTNNB1 abundance. Plays a role as a modulator of the AKT-mTOR signaling pathway controlling the tempo of the process of newborn neurons integration during adult neurogenesis, including neuron positioning, dendritic development and synapse formation. Inhibits the activation of AKT-mTOR signaling upon interaction with CCDC88A. Regulates the migration of early-born granule cell precursors toward the dentate gyrus during the hippocampal development. Inhibits ATF4 transcription factor activity in neurons by disrupting ATF4 dimerization and DNA-binding. Plays a role, together with PCNT, in the microtubule network formation. This Mus musculus (Mouse) protein is Disrupted in schizophrenia 1 homolog.